The chain runs to 63 residues: Cecropin (63 aa).

The first 23 residues, 1–23, serve as a signal peptide directing secretion; that stretch reads MNFYKIFVFIALILALSVSQSEA. Arg-62 bears the Arginine amide mark.

In terms of assembly, monomer. In terms of tissue distribution, hemolymph.

It is found in the secreted. In terms of biological role, cecropins have lytic and antibacterial activity against several Gram-negative bacteria. This chain is Cecropin, found in Glossina morsitans morsitans (Savannah tsetse fly).